Reading from the N-terminus, the 449-residue chain is Protein phosphatase fem-2 (449 aa).

The tract at residues E28–E34 is interaction with fem-1 and fem-3. Residues I54–F56 are interaction with fem-3. In terms of domain architecture, PPM-type phosphatase spans G160 to L424. Positions 202, 203, 370, and 415 each coordinate Mg(2+).

Belongs to the PP2C family. Component of a complex containing fem-1, fem-2 and fem-3. Interacts (via N-terminus) with fem-1 and fem-3. Component of the CBC(fem-1) E3 ubiquitin-protein ligase complex, at least composed of cul-2, elc-1, tra-1, fem-1, fem-2 and fem-3; mediates the ubiquitination and subsequent proteasomal degradation of tra-1. Interacts with tra-1. Interacts with sel-10. Mg(2+) serves as cofactor. It depends on Mn(2+) as a cofactor.

It catalyses the reaction O-phospho-L-seryl-[protein] + H2O = L-seryl-[protein] + phosphate. The enzyme catalyses O-phospho-L-threonyl-[protein] + H2O = L-threonyl-[protein] + phosphate. Functionally, dephosphorylates auto-phosphorylated Ca(2+)/calmodulin-dependent protein kinase unc-43/CAMKII in vitro. Involved in the regulation of sex determination. Together with fem-3, required for male sexual development by promoting the proteasomal-mediated degradation of tra-1, a transcription repressor of male-specific genes. Promotes apoptosis. The sequence is that of Protein phosphatase fem-2 from Caenorhabditis elegans.